The chain runs to 359 residues: Membrane-bound lytic murein transglycosylase C (359 aa).

Residues 1 to 16 form the signal peptide; that stretch reads MKKYLALALIAPLLIS. Cysteine 17 carries the N-palmitoyl cysteine lipid modification. Cysteine 17 carries S-diacylglycerol cysteine lipidation.

This sequence belongs to the transglycosylase Slt family.

The protein resides in the cell outer membrane. The enzyme catalyses Exolytic cleavage of the (1-&gt;4)-beta-glycosidic linkage between N-acetylmuramic acid (MurNAc) and N-acetylglucosamine (GlcNAc) residues in peptidoglycan, from either the reducing or the non-reducing ends of the peptidoglycan chains, with concomitant formation of a 1,6-anhydrobond in the MurNAc residue.. Its function is as follows. Murein-degrading enzyme. May play a role in recycling of muropeptides during cell elongation and/or cell division. The chain is Membrane-bound lytic murein transglycosylase C from Escherichia coli (strain SE11).